Reading from the N-terminus, the 216-residue chain is Putative cat eye syndrome critical region protein 9 (216 aa).

The signal sequence occupies residues 1-23; that stretch reads MQSHLAPLACAAAAGRAGGSCQA. Asn-148 carries an N-linked (GlcNAc...) asparagine glycan.

As to expression, ubiquitously expressed with higher expression in heart.

The protein localises to the secreted. The chain is Putative cat eye syndrome critical region protein 9 (CECR9) from Homo sapiens (Human).